A 90-amino-acid chain; its full sequence is Antitoxin epsilon (90 aa).

The protein belongs to the epsilon antitoxin family. In the presence of the zeta toxin, forms an inactive PezA(2)PezT(2) heterotetramer.

Its function is as follows. Antitoxin component of a type II toxin-antitoxin (TA) system. Neutralizes the toxic effect of cognate zeta toxin. Part of a postsegregational killing (PSK) system involved in the killing of plasmid-free cells. Continuous synthesis of the epsilon antitoxin is required to counteract the zeta toxin. In Streptococcus agalactiae, this protein is Antitoxin epsilon.